We begin with the raw amino-acid sequence, 452 residues long: Elongation factor Tu, mitochondrial (452 aa).

Residues 1–43 (MAAATLLRATPRFSGLCASPTPFLQGRLRPLKAPASPFLCRGL) constitute a mitochondrion transit peptide. Positions 55 to 251 (KPHVNVGTIG…AVDTYIPVPT (197 aa)) constitute a tr-type G domain. The tract at residues 64–71 (GHVDHGKT) is G1. Aspartate 67, glycine 69, lysine 70, threonine 71, and threonine 72 together coordinate GTP. Threonine 71 contributes to the Mg(2+) binding site. N6-acetyllysine is present on lysine 79. Lysine 88 carries the post-translational modification N6-acetyllysine; alternate. At lysine 88 the chain carries N6-succinyllysine; alternate. The segment at 105–109 (GITIN) is G2. Residues 126–129 (DCPG) form a G3 region. Asparagine 181, aspartate 184, serine 219, alanine 220, and leucine 221 together coordinate GTP. Residues 181 to 184 (NKAD) form a G4 region. The segment at 219–221 (SAL) is G5. Lysine 234 carries the post-translational modification N6-succinyllysine. Lysine 256 carries the N6-acetyllysine modification. Phosphothreonine is present on threonine 278. N6-succinyllysine is present on lysine 286. Residue serine 312 is modified to Phosphoserine. N6-acetyllysine is present on residues lysine 361 and lysine 418.

This sequence belongs to the TRAFAC class translation factor GTPase superfamily. Classic translation factor GTPase family. EF-Tu/EF-1A subfamily. As to quaternary structure, interacts with NLRX1. Interacts with ATG16L1.

The protein localises to the mitochondrion. The catalysed reaction is GTP + H2O = GDP + phosphate + H(+). GTP hydrolase that promotes the GTP-dependent binding of aminoacyl-tRNA to the A-site of ribosomes during protein biosynthesis. Plays a role in the regulation of autophagy and innate immunity. Recruits ATG5-ATG12 and NLRX1 at mitochondria and serves as a checkpoint of the RIGI-MAVS pathway. In turn, inhibits RLR-mediated type I interferon while promoting autophagy. The polypeptide is Elongation factor Tu, mitochondrial (Rattus norvegicus (Rat)).